Reading from the N-terminus, the 417-residue chain is CinA-like protein (417 aa).

The protein belongs to the CinA family.

In Microcystis aeruginosa (strain NIES-843 / IAM M-2473), this protein is CinA-like protein.